Consider the following 261-residue polypeptide: Hemin import ATP-binding protein HmuV (261 aa).

One can recognise an ABC transporter domain in the interval 5–241; it reads YTAENLTFTR…DALAHWYGAQ (237 aa). 37 to 44 is a binding site for ATP; it reads GPNGAGKS.

The protein belongs to the ABC transporter superfamily. Heme (hemin) importer (TC 3.A.1.14.5) family. The complex is composed of two ATP-binding proteins (HmuV), two transmembrane proteins (HmuU) and a solute-binding protein (HmuT).

The protein localises to the cell inner membrane. In terms of biological role, part of the ABC transporter complex HmuTUV involved in hemin import. Responsible for energy coupling to the transport system. The protein is Hemin import ATP-binding protein HmuV of Enterobacter cloacae.